A 268-amino-acid chain; its full sequence is Undecaprenyl-diphosphatase (268 aa).

8 consecutive transmembrane segments (helical) span residues 3 to 23 (FFNLLEAAFLGLIEGLTEFIP), 46 to 66 (FEVLIQLGAILAILSVYSAKL), 84 to 104 (LGVLVAFLPAAVIGALAHGFI), 107 to 127 (VLFETPMLVCIMLIVGGFILL), 144 to 164 (YPLPICLAIGFIQCLAMIPGV), 185 to 205 (AEFSFFLAMPTMAGAFAYDLF), 213 to 233 (FNDGALIVVGFIMAFISGVFV), and 246 to 266 (FALFGWWRLIVGSAGMAALII).

This sequence belongs to the UppP family.

The protein resides in the cell inner membrane. It carries out the reaction di-trans,octa-cis-undecaprenyl diphosphate + H2O = di-trans,octa-cis-undecaprenyl phosphate + phosphate + H(+). In terms of biological role, catalyzes the dephosphorylation of undecaprenyl diphosphate (UPP). Confers resistance to bacitracin. In Brucella abortus (strain S19), this protein is Undecaprenyl-diphosphatase.